A 332-amino-acid chain; its full sequence is MAPAQRCPLCRQTFFCGRGHVYSRKHQRQLKEALERLLPQVEAARKAIRAAQVERYVPEHERCCWCLCCGCEVREHLSHGNLTVLYGGLLEHLASPEHKKATNKFWWENKAEVQMKEKFLVTPQDYARFKKSMVKGLDSYEEKEDKVIKEMAAQIREVEQSRQEVVRSVLEPQAVPDPEEGSSAPRSWKGMNSQVASSLQQPSNLDLPPAPELDWMETGPSLTFIGHQDIPGVGNIHSGATPPWMIQDEEYIAGNQEIGPSYEEFLKEKEKQKLKKLPPDRVGANFDHSSRTSAGWLPSFGRVWNNGRRWQSRHQFKTEAAAMKKQSHTEKS.

The required for centrosome location stretch occupies residues 1–169 (MAPAQRCPLC…QSRQEVVRSV (169 aa)). Lys-31 carries the post-translational modification N6-acetyllysine; by NAT10. Residues 137–168 (LDSYEEKEDKVIKEMAAQIREVEQSRQEVVRS) adopt a coiled-coil conformation. The tract at residues 169-213 (VLEPQAVPDPEEGSSAPRSWKGMNSQVASSLQQPSNLDLPPAPEL) is disordered. Residues 190–204 (GMNSQVASSLQQPSN) show a composition bias toward polar residues.

As to quaternary structure, interacts with SASS6; the interaction increases with CENATAC acetylation. In terms of processing, acetylated. Acetylation oscillates throughout the cell cycle, and the acetylation state at Lys-31 is regulated by the deacetylase SIRT1 and the acetyltransferase NAT10. Deacetylated CENATAC is responsible for its centrosome targeting, and acetylated CENATAC promotes SASS6 degradation by enhancing the binding affinity of SASS6 for APC/C E3 ubiquitin-protein ligase complex/FZR1.

Its subcellular location is the cytoplasm. It localises to the cytoskeleton. The protein resides in the microtubule organizing center. It is found in the centrosome. Its function is as follows. Component of the minor spliceosome that promotes splicing of a specific, rare minor intron subtype. Negative regulator of centrosome duplication. Constrains centriole number by modulating the degradation of the centrosome-duplication-associated protein SASS6 in an acetylation-dependent manner. SIRT1 deacetylates CENATAC in G1 phase, allowing for SASS6 accumulation on the centrosome and subsequent procentriole assembly. The CENATAC acetylation level is restored in mitosis by NAT10, promoting SASS6 proteasome degradation by facilitating SASS6 binding to APC/C E3 ubiquitin-protein ligase complex/FZR1. The protein is Centrosomal AT-AC splicing factor of Homo sapiens (Human).